A 24-amino-acid chain; its full sequence is Ascaphin-7 (24 aa).

In terms of tissue distribution, expressed by the skin glands.

It is found in the secreted. Antimicrobial peptide that shows higher potency against Gram-negative bacteria than against Gram-positive bacteria. Has a very week hemolytic activity. This is Ascaphin-7 from Ascaphus truei (Coastal tailed frog).